A 31-amino-acid polypeptide reads, in one-letter code: M-poneritoxin-Nc3b (31 aa).

This sequence belongs to the ponericin-G family. Expressed by the venom gland.

Its subcellular location is the secreted. It is found in the target cell membrane. Its function is as follows. Membrane-perturbating peptide with a few moderate activities. It is insecticidal, since it induces reversible paralysis in insects (L.cuprina) after 1 hour, but fails to kill them. It is also antiparasitic, since it moderately inhibits the larval development of the major pathogenic nematode of ruminants (H.contortus, IC(50)=23.2 uM) and reduces the motility of adult males of the other nematode B.malayi. It does not show antibacterial activity (MIC&gt;40 uM). It is not cytotoxic to HEK293 cells and does not induce hemolysis in human erythrocytes. It does not cause an increase in intracellular calcium concentration on neuronal and epithelial cell lines. This chain is M-poneritoxin-Nc3b, found in Neoponera commutata (Large hunting ant).